A 198-amino-acid polypeptide reads, in one-letter code: Single-stranded DNA cytosine deaminase (198 aa).

The Bipartite nuclear localization signal signature appears at 1-30; the sequence is MDSLLMNRRKFLYQFKNVRWAKGRRETYLC. Residues 2–26 form an interaction with SUPT6H region; sequence DSLLMNRRKFLYQFKNVRWAKGRRE. In terms of domain architecture, CMP/dCMP-type deaminase spans 23–129; it reads GRRETYLCYV…KAEPEGLRRL (107 aa). Threonine 27 bears the Phosphothreonine; by PKA mark. Serine 38 carries the phosphoserine; by PKA modification. The tract at residues 39–42 is important for interaction with CTNNBL1; the sequence is ATSF. Histidine 56 provides a ligand contact to Zn(2+). The Proton donor role is filled by glutamate 58. Zn(2+) contacts are provided by cysteine 87 and cysteine 90. Residues 88-116 are required for interaction with RNF126; the sequence is YDCARHVADFLRGNPNLSLRIFTARLYFC. A Nuclear export signal motif is present at residues 183–198; that stretch reads LYEVDDLRDAFRTLGL.

This sequence belongs to the cytidine and deoxycytidylate deaminase family. Interacts with CTNNBL1; the interaction is important for the immunoglobulin switch activity of AICDA. Interacts (via its NLS) with KPNA1. Interacts with PKA/PRKACA and PRKAR1A/PKR1. Interacts with TRIM28 and NCL. Interacts with SUPT6H. Interacts with RNF126. Directly interacts with MCM3AP; this interaction may favor AICDA recruitment to immunoglobulin variable region genes, hence promoting somatic hypermutations. It depends on Zn(2+) as a cofactor. In terms of processing, ser-38 is the major site whereas Thr-27 is the minor site of phosphorylation. Phosphorylation regulates its class-switch recombination activity. Post-translationally, probably monoubiquitinated on several residues by RNF126. In terms of tissue distribution, strongly expressed in lymph nodes and tonsils.

Its subcellular location is the nucleus. It localises to the cytoplasm. It is found in the cytosol. It carries out the reaction a 2'-deoxycytidine in single-stranded DNA + H2O + H(+) = a 2'-deoxyuridine in single-stranded DNA + NH4(+). In terms of biological role, single-stranded DNA-specific cytidine deaminase. Involved in somatic hypermutation (SHM), gene conversion, and class-switch recombination (CSR) in B-lymphocytes by deaminating C to U during transcription of Ig-variable (V) and Ig-switch (S) region DNA. Required for several crucial steps of B-cell terminal differentiation necessary for efficient antibody responses. May also play a role in the epigenetic regulation of gene expression by participating in DNA demethylation. The chain is Single-stranded DNA cytosine deaminase (AICDA) from Homo sapiens (Human).